The sequence spans 486 residues: Galactose-1-phosphate uridylyltransferase (486 aa).

This sequence belongs to the galactose-1-phosphate uridylyltransferase type 2 family.

The protein resides in the cytoplasm. It carries out the reaction alpha-D-galactose 1-phosphate + UDP-alpha-D-glucose = alpha-D-glucose 1-phosphate + UDP-alpha-D-galactose. It participates in carbohydrate metabolism; galactose metabolism. This chain is Galactose-1-phosphate uridylyltransferase, found in Lacticaseibacillus paracasei (strain ATCC 334 / BCRC 17002 / CCUG 31169 / CIP 107868 / KCTC 3260 / NRRL B-441) (Lactobacillus paracasei).